Here is a 468-residue protein sequence, read N- to C-terminus: UDP-N-acetylmuramoyl-L-alanine--L-glutamate ligase (468 aa).

122-128 (GTKGKST) lines the ATP pocket.

Belongs to the MurCDEF family. MurD2 subfamily.

It is found in the cytoplasm. The enzyme catalyses UDP-N-acetyl-alpha-D-muramoyl-L-alanine + L-glutamate + ATP = UDP-N-acetyl-alpha-D-muramoyl-L-alanyl-L-glutamate + ADP + phosphate + H(+). It participates in cell wall biogenesis; peptidoglycan biosynthesis. Its function is as follows. Cell wall formation. Catalyzes the addition of L-glutamate to the nucleotide precursor UDP-N-acetylmuramoyl-L-alanine. The protein is UDP-N-acetylmuramoyl-L-alanine--L-glutamate ligase of Xylella fastidiosa (strain Temecula1 / ATCC 700964).